Reading from the N-terminus, the 168-residue chain is Quinol oxidase subunit 2 (168 aa).

A helical membrane pass occupies residues 9-31 (EVWFIVMLVLVLIFFSWNVYYLS).

Belongs to the cytochrome c oxidase subunit 2 family.

The protein resides in the cell membrane. The catalysed reaction is 2 a quinol + O2 = 2 a quinone + 2 H2O. In terms of biological role, the terminal oxidase is the component of the respiratory chain that catalyzes the reduction of oxygen to water. Subunits 1-3 form the functional core of the enzyme complex. Its function is as follows. Subunit 2 transfers the electrons from caldariella quinol to the bimetallic center of the catalytic subunit 1 that is formed by heme A3 and Cu(B). The chain is Quinol oxidase subunit 2 (soxA) from Sulfolobus acidocaldarius (strain ATCC 33909 / DSM 639 / JCM 8929 / NBRC 15157 / NCIMB 11770).